Consider the following 350-residue polypeptide: FAD:protein FMN transferase (350 aa).

Positions 1 to 19 are cleaved as a signal peptide; the sequence is MKMTFCRAVCLAAAFLLMG. Cys20 is lipidated: N-palmitoyl cysteine. Cys20 carries S-diacylglycerol cysteine lipidation. FAD-binding positions include Met41, Tyr78, 119–121, and Asp181; that span reads AMD. Position 184 (Thr184) interacts with Mg(2+). FAD contacts are provided by Glu187 and Ile272. Asp298, Asp301, and Thr302 together coordinate Mg(2+).

This sequence belongs to the ApbE family. Homodimer. Mg(2+) serves as cofactor.

The protein localises to the cell inner membrane. The catalysed reaction is L-threonyl-[protein] + FAD = FMN-L-threonyl-[protein] + AMP + H(+). Functionally, flavin transferase that catalyzes the transfer of the FMN moiety of FAD and its covalent binding to the hydroxyl group of a threonine residue in a target flavoprotein such as NqrB and NqrC, two subunits of the NQR complex. This chain is FAD:protein FMN transferase, found in Salmonella typhimurium (strain LT2 / SGSC1412 / ATCC 700720).